Here is a 615-residue protein sequence, read N- to C-terminus: 1-deoxy-D-xylulose-5-phosphate synthase (615 aa).

Thiamine diphosphate contacts are provided by residues His72 and 111-113 (GHS). Position 142 (Asp142) interacts with Mg(2+). Thiamine diphosphate is bound by residues 143-144 (GA), Asn171, Tyr278, and Glu360. Residue Asn171 participates in Mg(2+) binding.

This sequence belongs to the transketolase family. DXPS subfamily. Homodimer. Mg(2+) serves as cofactor. The cofactor is thiamine diphosphate.

The catalysed reaction is D-glyceraldehyde 3-phosphate + pyruvate + H(+) = 1-deoxy-D-xylulose 5-phosphate + CO2. The protein operates within metabolic intermediate biosynthesis; 1-deoxy-D-xylulose 5-phosphate biosynthesis; 1-deoxy-D-xylulose 5-phosphate from D-glyceraldehyde 3-phosphate and pyruvate: step 1/1. Catalyzes the acyloin condensation reaction between C atoms 2 and 3 of pyruvate and glyceraldehyde 3-phosphate to yield 1-deoxy-D-xylulose-5-phosphate (DXP). The chain is 1-deoxy-D-xylulose-5-phosphate synthase from Campylobacter jejuni subsp. doylei (strain ATCC BAA-1458 / RM4099 / 269.97).